A 350-amino-acid polypeptide reads, in one-letter code: Protein-arginine kinase (350 aa).

The region spanning 21–253 (IVISSRIRLA…VRLADQEREA (233 aa)) is the Phosphagen kinase C-terminal domain. Residues 24–28 (SSRIR), His90, Arg124, 175–179 (RASTM), and 206–211 (RGLYGE) contribute to the ATP site. The short motif at 336–341 (RDVHRA) is the RDXXRA motif of the pArg binding pocket involved in allosteric regulation element.

The protein belongs to the ATP:guanido phosphotransferase family.

It carries out the reaction L-arginyl-[protein] + ATP = N(omega)-phospho-L-arginyl-[protein] + ADP + H(+). Appears to be allosterically activated by the binding of pArg-containing polypeptides to the pArg-binding pocket localized in the C-terminal domain of McsB. Catalyzes the specific phosphorylation of arginine residues in proteins. The polypeptide is Protein-arginine kinase (Moorella thermoacetica (strain ATCC 39073 / JCM 9320)).